The chain runs to 196 residues: Metalloproteinase inhibitor 2 (196 aa).

An N-terminal signal peptide occupies residues 1-2 (RA). Cys-3 contacts Zn(2+). Involved in metalloproteinase-binding stretches follow at residues 3-6 (CSCS) and 71-72 (SA). 6 cysteine pairs are disulfide-bonded: Cys-3–Cys-74, Cys-5–Cys-103, Cys-15–Cys-128, Cys-130–Cys-177, Cys-135–Cys-140, and Cys-148–Cys-169. Residues 3 to 128 (CSCSPVHPQQ…SLNHRYQMGC (126 aa)) form the NTR domain.

Belongs to the protease inhibitor I35 (TIMP) family. As to quaternary structure, interacts (via the C-terminal) with MMP2 (via the C-terminal PEX domain); the interaction inhibits the MMP2 activity. The activity of TIMP2 is dependent on the presence of disulfide bonds.

Its subcellular location is the secreted. Functionally, complexes with metalloproteinases (such as collagenases) and irreversibly inactivates them by binding to their catalytic zinc cofactor. This chain is Metalloproteinase inhibitor 2 (TIMP2), found in Cricetulus longicaudatus (Long-tailed dwarf hamster).